The sequence spans 700 residues: Calpain-2 catalytic subunit (700 aa).

Ala2 is subject to N-acetylalanine. Positions 2-19 (AGIAIKLAKDREAAEGLG) are cleaved as a propeptide — anchors to the small subunit. The region spanning 45 to 344 (LFQDPSFPAL…YSRLEICNLT (300 aa)) is the Calpain catalytic domain. Residues Ile89, Gly91, and Asp96 each contribute to the Ca(2+) site. The active site involves Cys105. Glu175, Gln229, and Lys230 together coordinate Ca(2+). Active-site residues include His262 and Asn286. Ca(2+)-binding residues include Glu292, Asp299, Gln319, and Glu323. The segment at 345–514 (PDTLTCDSYK…KKADYQAVDD (170 aa)) is domain III. Positions 515–529 (EIEANIEEIDANEED) are linker. Positions 530-700 (IDDGFRRLFV…LASWLSFSVL (171 aa)) are domain IV. 16 residues coordinate Ca(2+): Ala542, Asp545, Glu547, Glu552, Asp585, Asp587, Ser589, Lys591, Glu596, Asp615, Asp617, Ser619, Thr621, Glu626, Asp658, and Asn661. 2 EF-hand domains span residues 572-605 (FSIETCKIMVDMLDEDGSGKLGLKEFYILWTKIQ) and 602-637 (TKIQKYQKIYREIDVDRSGTMNSYEMRKALEEAGFK).

Belongs to the peptidase C2 family. Forms a heterodimer with a small (regulatory) subunit (CAPNS1). Interacts with CPEB3; this leads to cleavage of CPEB3. Requires Ca(2+) as cofactor. Ubiquitous.

It localises to the cytoplasm. The protein localises to the cell membrane. It carries out the reaction Broad endopeptidase specificity.. Activated by 200-1000 micromolar concentrations of calcium and inhibited by calpastatin. In terms of biological role, calcium-regulated non-lysosomal thiol-protease which catalyzes limited proteolysis of substrates involved in cytoskeletal remodeling and signal transduction. Proteolytically cleaves MYOC at 'Arg-226'. Proteolytically cleaves CPEB3 following neuronal stimulation which abolishes CPEB3 translational repressor activity, leading to translation of CPEB3 target mRNAs. The polypeptide is Calpain-2 catalytic subunit (Capn2) (Mus musculus (Mouse)).